A 315-amino-acid chain; its full sequence is Methionyl-tRNA formyltransferase (315 aa).

The segment at 2-189 (SESLRIIFAG…LITTLKQLAD (188 aa)) is N-terminal domain. 113–116 (SLLP) lines the (6S)-5,6,7,8-tetrahydrofolate pocket. Residues 210-315 (KEEARIDWSL…EWFVPGNRLV (106 aa)) form a C-terminal domain region.

The protein belongs to the Fmt family.

The catalysed reaction is L-methionyl-tRNA(fMet) + (6R)-10-formyltetrahydrofolate = N-formyl-L-methionyl-tRNA(fMet) + (6S)-5,6,7,8-tetrahydrofolate + H(+). Functionally, attaches a formyl group to the free amino group of methionyl-tRNA(fMet). The formyl group appears to play a dual role in the initiator identity of N-formylmethionyl-tRNA by promoting its recognition by IF2 and preventing the misappropriation of this tRNA by the elongation apparatus. The protein is Methionyl-tRNA formyltransferase of Escherichia coli O157:H7.